A 72-amino-acid polypeptide reads, in one-letter code: Large ribosomal subunit protein uL30 (72 aa).

It belongs to the universal ribosomal protein uL30 family. Part of the 50S ribosomal subunit.

This Mycobacterium ulcerans (strain Agy99) protein is Large ribosomal subunit protein uL30.